The sequence spans 429 residues: ATP-dependent Clp protease ATP-binding subunit ClpX (429 aa).

The 54-residue stretch at 1 to 54 (MARSKSQKIEGCSFCGRTRAEAEGKIISAKSVAICFECSKICHNLFKEESDKPA) folds into the ClpX-type ZB domain. Residues Cys12, Cys15, Cys35, and Cys38 each contribute to the Zn(2+) site. 119–126 (PTGSGKTL) contacts ATP.

The protein belongs to the ClpX chaperone family. Component of the ClpX-ClpP complex. Forms a hexameric ring that, in the presence of ATP, binds to fourteen ClpP subunits assembled into a disk-like structure with a central cavity, resembling the structure of eukaryotic proteasomes.

Its function is as follows. ATP-dependent specificity component of the Clp protease. It directs the protease to specific substrates. Can perform chaperone functions in the absence of ClpP. The polypeptide is ATP-dependent Clp protease ATP-binding subunit ClpX (Borrelia duttonii (strain Ly)).